The following is a 374-amino-acid chain: DNA replication and repair protein RecF (374 aa).

An ATP-binding site is contributed by 30 to 37; it reads GPNAQGKT.

The protein belongs to the RecF family.

Its subcellular location is the cytoplasm. Functionally, the RecF protein is involved in DNA metabolism; it is required for DNA replication and normal SOS inducibility. RecF binds preferentially to single-stranded, linear DNA. It also seems to bind ATP. The sequence is that of DNA replication and repair protein RecF from Lactobacillus johnsonii (strain CNCM I-12250 / La1 / NCC 533).